The chain runs to 290 residues: Phosphatidylglycerol--prolipoprotein diacylglyceryl transferase (290 aa).

7 helical membrane-spanning segments follow: residues 21 to 41, 60 to 80, 96 to 116, 124 to 144, 199 to 219, 226 to 246, and 260 to 280; these read VSLH…MWLA, LLYA…VLFY, WDGG…MLWF, FFQV…AGRL, SQLY…NVFI, GSVS…VECF, and ISMG…MMIW. R143 provides a ligand contact to a 1,2-diacyl-sn-glycero-3-phospho-(1'-sn-glycerol).

The protein belongs to the Lgt family.

It is found in the cell inner membrane. It carries out the reaction L-cysteinyl-[prolipoprotein] + a 1,2-diacyl-sn-glycero-3-phospho-(1'-sn-glycerol) = an S-1,2-diacyl-sn-glyceryl-L-cysteinyl-[prolipoprotein] + sn-glycerol 1-phosphate + H(+). It participates in protein modification; lipoprotein biosynthesis (diacylglyceryl transfer). Its function is as follows. Catalyzes the transfer of the diacylglyceryl group from phosphatidylglycerol to the sulfhydryl group of the N-terminal cysteine of a prolipoprotein, the first step in the formation of mature lipoproteins. In Yersinia pseudotuberculosis serotype O:1b (strain IP 31758), this protein is Phosphatidylglycerol--prolipoprotein diacylglyceryl transferase.